Consider the following 310-residue polypeptide: tRNA uridine(34) hydroxylase (310 aa).

Positions Ser-124 to Ser-218 constitute a Rhodanese domain. Catalysis depends on Cys-178, which acts as the Cysteine persulfide intermediate.

It belongs to the TrhO family.

The enzyme catalyses uridine(34) in tRNA + AH2 + O2 = 5-hydroxyuridine(34) in tRNA + A + H2O. Its function is as follows. Catalyzes oxygen-dependent 5-hydroxyuridine (ho5U) modification at position 34 in tRNAs. This Pseudomonas entomophila (strain L48) protein is tRNA uridine(34) hydroxylase.